Reading from the N-terminus, the 83-residue chain is Acyl carrier protein MmaB (83 aa).

Positions 3–83 (DPVRQRILLA…LSQSELESPT (81 aa)) constitute a Carrier domain. Residue S39 is modified to O-(pantetheine 4'-phosphoryl)serine.

Belongs to the acyl carrier protein (ACP) family. It depends on pantetheine 4'-phosphate as a cofactor.

It functions in the pathway lipid metabolism; fatty acid metabolism. In terms of biological role, acyl-carrier protein (ACP) involved in the biosynthesis of a unique class of isonitrile lipopeptides (INLPs) that seem to play a role in metal acquisition in M.marinum. Is the dedicated ACP for the loading of activated acyl groups catalyzed by MmaC. The protein is Acyl carrier protein MmaB of Mycobacterium marinum (strain ATCC BAA-535 / M).